A 474-amino-acid chain; its full sequence is Probable glycine dehydrogenase (decarboxylating) subunit 2 (474 aa).

An N6-(pyridoxal phosphate)lysine modification is found at Lys266.

It belongs to the GcvP family. C-terminal subunit subfamily. The glycine cleavage system is composed of four proteins: P, T, L and H. In this organism, the P 'protein' is a heterodimer of two subunits. The cofactor is pyridoxal 5'-phosphate.

The enzyme catalyses N(6)-[(R)-lipoyl]-L-lysyl-[glycine-cleavage complex H protein] + glycine + H(+) = N(6)-[(R)-S(8)-aminomethyldihydrolipoyl]-L-lysyl-[glycine-cleavage complex H protein] + CO2. Functionally, the glycine cleavage system catalyzes the degradation of glycine. The P protein binds the alpha-amino group of glycine through its pyridoxal phosphate cofactor; CO(2) is released and the remaining methylamine moiety is then transferred to the lipoamide cofactor of the H protein. This Thermus thermophilus (strain ATCC 27634 / DSM 579 / HB8) protein is Probable glycine dehydrogenase (decarboxylating) subunit 2.